A 366-amino-acid polypeptide reads, in one-letter code: MWNATPSEEPGPNLTLPDLGWDAPPENDSLVEELLPLFPTPLLAGVTATCVALFVVGIAGNLLTMLVVSRFREMRTTTNLYLSSMAFSDLLIFLCMPLDLFRLWQYRPWNLGNLLCKLFQFVSESCTYATVLTITALSVERYFAICFPLRAKVVVTKGRVKLVILVIWAVAFCSAGPIFVLVGVEHDNGTDPRDTNECRATEFAVRSGLLTVMVWVSSVFFFLPVFCLTVLYSLIGRKLWRRKRGEAAVGSSLRDQNHKQTVKMLAVVVFAFILCWLPFHVGRYLFSKSLEPGSVEIAQISQYCNLVSFVLFYLSAAINPILYNIMSKKYRVAVFKLLGFEPFSQRKLSTLKDESSRAWTESSINT.

Over Met1 to Thr40 the chain is Extracellular. N-linked (GlcNAc...) asparagine glycosylation is found at Asn13 and Asn27. Residues Pro41–Leu66 form a helical membrane-spanning segment. Topologically, residues Val67–Arg72 are cytoplasmic. The helical transmembrane segment at Glu73–Met96 threads the bilayer. Residues Pro97–Lys117 lie on the Extracellular side of the membrane. Cys116 and Cys198 are disulfide-bonded. The chain crosses the membrane as a helical span at residues Leu118 to Val139. Over Glu140–Leu162 the chain is Cytoplasmic. A helical membrane pass occupies residues Val163–Gly183. The Extracellular portion of the chain corresponds to Val184–Thr211. Residues Val212–Ile235 form a helical membrane-spanning segment. Topologically, residues Gly236–Lys263 are cytoplasmic. Residues Met264–Leu285 form a helical membrane-spanning segment. Residues Phe286–Gln302 are Extracellular-facing. Residues Tyr303–Met326 form a helical membrane-spanning segment. Over Ser327 to Thr366 the chain is Cytoplasmic.

This sequence belongs to the G-protein coupled receptor 1 family. Pituitary and hypothalamus.

The protein localises to the cell membrane. Receptor for ghrelin, coupled to G-alpha-11 proteins. Stimulates growth hormone secretion. Also binds other growth hormone releasing peptides (GHRP) (e.g. Met-enkephalin and GHRP-6) as well as non-peptide, low molecular weight secretagogues (e.g. L-692,429, MK-0677, adenosine). This is Growth hormone secretagogue receptor type 1 (GHSR) from Sus scrofa (Pig).